Consider the following 1663-residue polypeptide: Cortactin-binding protein 2 (1663 aa).

5 disordered regions span residues 1–23, 203–222, 367–440, 454–478, and 498–616; these read MATD…AGAA, KKKT…RSTE, GASV…LHPG, GNAN…SPTS, and RFTS…PKPS. The stretch at 119-276 forms a coiled coil; that stretch reads KKMQERMSAQ…EQLKRGSDSK (158 aa). Low complexity predominate over residues 386-396; the sequence is PSTGSTPDPTS. Arg498 carries the post-translational modification Asymmetric dimethylarginine. A compositionally biased stretch (polar residues) spans 583–593; sequence TVASTPSSLPQ. ANK repeat units follow at residues 709 to 739, 743 to 772, 776 to 805, 809 to 838, 842 to 871, and 912 to 942; these read GRPT…DINY, DGHS…QVNA, NGFT…NINH, GGQT…NRSV, DGWT…PAHG, and EGWT…EPER. The interval 1449-1482 is disordered; it reads KGESGAWRKVNTSPRRKSGRFSLPTWNKPDLSTE. Ser1524 is subject to Phosphoserine. A disordered region spans residues 1581–1663; the sequence is QKEVSPLSSH…KNEHLEKPNK (83 aa). Polar residues predominate over residues 1582–1599; the sequence is KEVSPLSSHQTTECSNSK. Low complexity predominate over residues 1624-1638; the sequence is SQNTKRSSSSSNTRQ. Over residues 1639–1648 the composition is skewed to polar residues; that stretch reads IEINNNSKEV. A compositionally biased stretch (basic and acidic residues) spans 1653 to 1663; that stretch reads HKNEHLEKPNK.

Interacts with CTTN/cortactin SH3 domain. Interacts with STRN, STRN4/zinedin and MOB4/phocein; this interactions mediate the association with the STRIPAK core complex and may regulate dendritic spine distribution of the STRIPAK complex in hippocampal neurons. Activation of glutamate receptors weakens the interaction with STRN and STRN4. As to expression, highest expression in brain. Also expressed in kidney, pancreas, lung, heart, liver, skeletal muscle and placenta.

The protein resides in the cytoplasm. Its subcellular location is the cell cortex. It localises to the cell projection. The protein localises to the dendritic spine. Functionally, regulates the dendritic spine distribution of CTTN/cortactin in hippocampal neurons, and thus controls dendritic spinogenesis and dendritic spine maintenance. Associates with the striatin-interacting phosphatase and kinase (STRIPAK) core complex to regulate dendritic spine distribution of the STRIPAK complex in hippocampal neurons. The chain is Cortactin-binding protein 2 from Homo sapiens (Human).